A 399-amino-acid polypeptide reads, in one-letter code: CCA-adding enzyme (399 aa).

Residues Gly-33 and Arg-36 each coordinate ATP. CTP contacts are provided by Gly-33 and Arg-36. Mg(2+)-binding residues include Asp-46 and Asp-48. The ATP site is built by Arg-117, Asp-160, Arg-163, Arg-166, and Arg-169. CTP contacts are provided by Arg-117, Asp-160, Arg-163, Arg-166, and Arg-169.

The protein belongs to the tRNA nucleotidyltransferase/poly(A) polymerase family. Bacterial CCA-adding enzyme type 3 subfamily. As to quaternary structure, homodimer. The cofactor is Mg(2+).

The catalysed reaction is a tRNA precursor + 2 CTP + ATP = a tRNA with a 3' CCA end + 3 diphosphate. The enzyme catalyses a tRNA with a 3' CCA end + 2 CTP + ATP = a tRNA with a 3' CCACCA end + 3 diphosphate. In terms of biological role, catalyzes the addition and repair of the essential 3'-terminal CCA sequence in tRNAs without using a nucleic acid template. Adds these three nucleotides in the order of C, C, and A to the tRNA nucleotide-73, using CTP and ATP as substrates and producing inorganic pyrophosphate. tRNA 3'-terminal CCA addition is required both for tRNA processing and repair. Also involved in tRNA surveillance by mediating tandem CCA addition to generate a CCACCA at the 3' terminus of unstable tRNAs. While stable tRNAs receive only 3'-terminal CCA, unstable tRNAs are marked with CCACCA and rapidly degraded. The chain is CCA-adding enzyme from Lactobacillus helveticus (strain DPC 4571).